The primary structure comprises 281 residues: Aliphatic sulfonates import ATP-binding protein SsuB (281 aa).

The region spanning leucine 40 to leucine 263 is the ABC transporter domain. Glycine 72–serine 79 serves as a coordination point for ATP.

This sequence belongs to the ABC transporter superfamily. Aliphatic sulfonates importer (TC 3.A.1.17.2) family. In terms of assembly, the complex is composed of two ATP-binding proteins (SsuB), two transmembrane proteins (SsuC) and a solute-binding protein (SsuA).

It is found in the cell inner membrane. It catalyses the reaction ATP + H2O + aliphatic sulfonate-[sulfonate-binding protein]Side 1 = ADP + phosphate + aliphatic sulfonateSide 2 + [sulfonate-binding protein]Side 1.. Functionally, part of the ABC transporter complex SsuABC involved in aliphatic sulfonates import. Responsible for energy coupling to the transport system. The sequence is that of Aliphatic sulfonates import ATP-binding protein SsuB from Rhodopseudomonas palustris (strain BisA53).